The chain runs to 341 residues: Cell wall mannoprotein PIR1 (341 aa).

The signal sequence occupies residues 1 to 18; the sequence is MQYKKSLVASALVATSLA. Residues 19–63 constitute a propeptide that is removed on maturation; that stretch reads AYAPKDPWSTLTPSATYKGGITDYSSTFGIAVEPIATTASSKAKR. PIR1/2/3 repeat units follow at residues 64–82, 83–101, 102–120, 126–144, 145–163, 164–182, 183–201, and 202–220; these read AAAI…TKTT, AAAV…TKTK, AAAV…TKTT, AAAV…TNTT, and VAPV…TLTS.

This sequence belongs to the PIR protein family. Post-translationally, covalently linked to beta-1,3-glucan of the inner cell wall layer via an alkali-sensitive ester linkage between the gamma-carboxyl group of glutamic acids, arising from specific glutamines within the PIR1/2/3 repeats, and hydroxyl groups of glucoses of beta-1,3-glucan chains. O-glycosylated. Extensively O-mannosylated.

It is found in the secreted. The protein localises to the cell wall. Functionally, component of the outer cell wall layer. Required for stability of the cell wall and for optimal growth. Required for resistance against several antifungal and cell wall-perturbing agents and for tolerance to heat shock. The protein is Cell wall mannoprotein PIR1 (PIR1) of Saccharomyces cerevisiae (strain YJM789) (Baker's yeast).